Consider the following 245-residue polypeptide: MASLALNTQADPEIELFVKAGSDGESIGNCPFCQRLFMILWLKGVKFNVTTIDTARKPEELKDLAPGTNPPFLIYNKELKTDFIKIEEFLEKTLAPPRYPHLSPKYKESFDVGCNLFAKFSAYIKNTQKEANKNFEKSLLREFKRLDDYLNTPLLDEIDPDSTEERTLSRRLFLDGDQLTLADCSLLPKLNIIKVAAKKYRDFDIPAEFSGVWRYLHNAYAREEFAHTCPEDKEIENTYASVAKQ.

A required for insertion into the membrane region spans residues 1–96 (MASLALNTQA…EEFLEKTLAP (96 aa)). E25 is a binding site for glutathione. The G-site signature appears at 30–33 (CPFC). An intrachain disulfide couples C30 to C33. Residues 32–52 (FCQRLFMILWLKGVKFNVTTI) traverse the membrane as a helical segment. Residues 76–239 (NKELKTDFIK…PEDKEIENTY (164 aa)) form the GST C-terminal domain. H227 lines the glutathione pocket.

The protein belongs to the chloride channel CLIC family. As to quaternary structure, monomer. Interacts with TRAPPC2 and RYR2.

The protein resides in the cytoplasm. It localises to the membrane. It catalyses the reaction chloride(in) = chloride(out). It carries out the reaction tert-butyl hydroperoxide + 2 glutathione = tert-butanol + glutathione disulfide + H2O. The catalysed reaction is cumene hydroperoxide + 2 glutathione = 2-phenylpropan-2-ol + glutathione disulfide + H2O. Functionally, in the soluble state, catalyzes glutaredoxin-like thiol disulfide exchange reactions with reduced glutathione as electron donor. Displays weak glutathione peroxidase activity. Can insert into membranes and form chloride ion channels. Membrane insertion seems to be redox-regulated and may occur only under oxidizing conditions. Modulates the activity of RYR2 and inhibits calcium influx. This chain is Chloride intracellular channel protein 2, found in Rattus norvegicus (Rat).